Here is a 106-residue protein sequence, read N- to C-terminus: Iron-sulfur cluster assembly protein CyaY (106 aa).

The protein belongs to the frataxin family.

Functionally, involved in iron-sulfur (Fe-S) cluster assembly. May act as a regulator of Fe-S biogenesis. The polypeptide is Iron-sulfur cluster assembly protein CyaY (Klebsiella pneumoniae subsp. pneumoniae (strain ATCC 700721 / MGH 78578)).